Here is a 250-residue protein sequence, read N- to C-terminus: 3-deoxy-manno-octulosonate cytidylyltransferase (250 aa).

This sequence belongs to the KdsB family.

It is found in the cytoplasm. It catalyses the reaction 3-deoxy-alpha-D-manno-oct-2-ulosonate + CTP = CMP-3-deoxy-beta-D-manno-octulosonate + diphosphate. It functions in the pathway nucleotide-sugar biosynthesis; CMP-3-deoxy-D-manno-octulosonate biosynthesis; CMP-3-deoxy-D-manno-octulosonate from 3-deoxy-D-manno-octulosonate and CTP: step 1/1. It participates in bacterial outer membrane biogenesis; lipopolysaccharide biosynthesis. Functionally, activates KDO (a required 8-carbon sugar) for incorporation into bacterial lipopolysaccharide in Gram-negative bacteria. This Sinorhizobium medicae (strain WSM419) (Ensifer medicae) protein is 3-deoxy-manno-octulosonate cytidylyltransferase.